Reading from the N-terminus, the 34-residue chain is Protamine-Z1/Z2 (34 aa).

Residues 1–34 form a disordered region; the sequence is PRRRRRSSRPVRRRRRYRRSTVARRRRRVVRRRR.

As to expression, testis.

The protein localises to the nucleus. Its subcellular location is the chromosome. In terms of biological role, protamines substitute for histones in the chromatin of sperm during the haploid phase of spermatogenesis. They compact sperm DNA into a highly condensed, stable and inactive complex. The protein is Protamine-Z1/Z2 of Thunnus thynnus (Atlantic bluefin tuna).